The chain runs to 310 residues: Transcription initiation factor IIB (310 aa).

A run of 2 repeats spans residues Arg126–Leu209 and Arg220–Gln301.

The protein belongs to the TFIIB family.

In terms of biological role, stabilizes TBP binding to an archaeal box-A promoter. Also responsible for recruiting RNA polymerase II to the pre-initiation complex (DNA-TBP-TFIIB). The protein is Transcription initiation factor IIB of Pyrodictium occultum.